Consider the following 269-residue polypeptide: Phycobilisome 37.5 kDa linker polypeptide, phycocyanin-associated, rod (269 aa).

The 176-residue stretch at 2 to 177 folds into the PBS-linker domain; that stretch reads TSSTAARQLG…IYRGYANSDR (176 aa). A CpcD-like domain is found at 217 to 269; the sequence is GQLYRVRVIQADRGRTTQIRRSIQEYLVSYDQLSPTLQRLNQRGSRVVNISPA.

It belongs to the phycobilisome linker protein family.

It localises to the cellular thylakoid membrane. In terms of biological role, rod linker protein, associated with phycocyanin. Linker polypeptides determine the state of aggregation and the location of the disk-shaped phycobiliprotein units within the phycobilisome and modulate their spectroscopic properties in order to mediate a directed and optimal energy transfer. The sequence is that of Phycobilisome 37.5 kDa linker polypeptide, phycocyanin-associated, rod (cpcH2) from Microchaete diplosiphon (Fremyella diplosiphon).